A 165-amino-acid chain; its full sequence is MAEYINPNALGDLEENVVSINRVTKVVKGGRRLRFSALVIVGDRNGHVGFGTGKAQEVPEAIRKAVEDAKRHLIKVPTVGTTIPHQVLGVDGGGKVLLKPASEGSGVAAGGSTRPIMELAGIPDVTAKSLGSSTAVNVVRATFDGLKNLKEAKVVAALRGVSLGE.

The S5 DRBM domain occupies 13–76; the sequence is LEENVVSINR…EDAKRHLIKV (64 aa).

It belongs to the universal ribosomal protein uS5 family. Part of the 30S ribosomal subunit. Contacts proteins S4 and S8.

Functionally, with S4 and S12 plays an important role in translational accuracy. Located at the back of the 30S subunit body where it stabilizes the conformation of the head with respect to the body. This Oenococcus oeni (strain ATCC BAA-331 / PSU-1) protein is Small ribosomal subunit protein uS5.